The sequence spans 310 residues: Olfactory receptor 2A12 (310 aa).

Residues Met1–Leu24 lie on the Extracellular side of the membrane. Asn4 is a glycosylation site (N-linked (GlcNAc...) asparagine). The chain crosses the membrane as a helical span at residues Phe25–Ile48. Topologically, residues Tyr49–Thr56 are cytoplasmic. The chain crosses the membrane as a helical span at residues Pro57 to Pro78. Over Lys79 to Gln99 the chain is Extracellular. Cys96 and Cys188 are oxidised to a cystine. The helical transmembrane segment at Thr100–Tyr119 threads the bilayer. Over Asp120–Arg138 the chain is Cytoplasmic. The helical transmembrane segment at Val139–Val157 threads the bilayer. Residues His158–Asn194 lie on the Extracellular side of the membrane. Residues Gln195 to Leu218 form a helical membrane-spanning segment. Residues His219–Lys235 are Cytoplasmic-facing. A helical transmembrane segment spans residues Ala236–Tyr258. The Extracellular segment spans residues Met259 to Lys271. A helical transmembrane segment spans residues Ile272–Leu291. Over Arg292–Met310 the chain is Cytoplasmic.

The protein belongs to the G-protein coupled receptor 1 family.

It localises to the cell membrane. Odorant receptor. In Homo sapiens (Human), this protein is Olfactory receptor 2A12 (OR2A12).